The chain runs to 189 residues: Large ribosomal subunit protein bL9 (189 aa).

This sequence belongs to the bacterial ribosomal protein bL9 family.

In terms of biological role, binds to the 23S rRNA. In Methylocella silvestris (strain DSM 15510 / CIP 108128 / LMG 27833 / NCIMB 13906 / BL2), this protein is Large ribosomal subunit protein bL9.